The primary structure comprises 248 residues: 3-deoxy-manno-octulosonate cytidylyltransferase (248 aa).

The protein belongs to the KdsB family.

Its subcellular location is the cytoplasm. It carries out the reaction 3-deoxy-alpha-D-manno-oct-2-ulosonate + CTP = CMP-3-deoxy-beta-D-manno-octulosonate + diphosphate. Its pathway is nucleotide-sugar biosynthesis; CMP-3-deoxy-D-manno-octulosonate biosynthesis; CMP-3-deoxy-D-manno-octulosonate from 3-deoxy-D-manno-octulosonate and CTP: step 1/1. The protein operates within bacterial outer membrane biogenesis; lipopolysaccharide biosynthesis. Its function is as follows. Activates KDO (a required 8-carbon sugar) for incorporation into bacterial lipopolysaccharide in Gram-negative bacteria. This Salmonella arizonae (strain ATCC BAA-731 / CDC346-86 / RSK2980) protein is 3-deoxy-manno-octulosonate cytidylyltransferase.